We begin with the raw amino-acid sequence, 770 residues long: Penicillin-binding protein 1C (770 aa).

At 1–8 (MPRLLTKR) the chain is on the cytoplasmic side. The helical; Signal-anchor for type II membrane protein transmembrane segment at 9 to 29 (GCWITLAAAPFLLFLAAWGAD) threads the bilayer. The Periplasmic segment spans residues 30–770 (KLWPLPLHEV…QIATVKFVMQ (741 aa)). The segment at 43-213 (RVVVAQDGTP…SRLRPDRWPE (171 aa)) is transglycosylase. The Proton donor; for transglycosylase activity role is filled by E84. A transpeptidase region spans residues 278-559 (AGLQRRLEEL…FASAVPLLNQ (282 aa)). S342 (acyl-ester intermediate; for transpeptidase activity) is an active-site residue.

It in the N-terminal section; belongs to the glycosyltransferase 51 family. This sequence in the C-terminal section; belongs to the transpeptidase family.

Its subcellular location is the cell inner membrane. It catalyses the reaction [GlcNAc-(1-&gt;4)-Mur2Ac(oyl-L-Ala-gamma-D-Glu-L-Lys-D-Ala-D-Ala)](n)-di-trans,octa-cis-undecaprenyl diphosphate + beta-D-GlcNAc-(1-&gt;4)-Mur2Ac(oyl-L-Ala-gamma-D-Glu-L-Lys-D-Ala-D-Ala)-di-trans,octa-cis-undecaprenyl diphosphate = [GlcNAc-(1-&gt;4)-Mur2Ac(oyl-L-Ala-gamma-D-Glu-L-Lys-D-Ala-D-Ala)](n+1)-di-trans,octa-cis-undecaprenyl diphosphate + di-trans,octa-cis-undecaprenyl diphosphate + H(+). Its pathway is cell wall biogenesis; peptidoglycan biosynthesis. Transglycosylase activity can be inhibited by moenomycin. Its function is as follows. Cell wall formation. The enzyme has a penicillin-insensitive transglycosylase N-terminal domain (formation of linear glycan strands) and a transpeptidase C-terminal domain which may not be functional. This Escherichia coli (strain K12) protein is Penicillin-binding protein 1C (pbpC).